A 231-amino-acid chain; its full sequence is NADH-ubiquinone oxidoreductase chain 4 (231 aa).

A run of 6 helical transmembrane segments spans residues 1 to 21, 34 to 54, 61 to 80, 84 to 106, 118 to 138, and 156 to 178; these read PIAG…YGII, LFIP…LTCL, SLIA…AITI, WGLS…LFCL, VLIL…WWLL, and LLIM…LSML.

The protein belongs to the complex I subunit 4 family.

It is found in the mitochondrion membrane. It carries out the reaction a ubiquinone + NADH + 5 H(+)(in) = a ubiquinol + NAD(+) + 4 H(+)(out). Its function is as follows. Core subunit of the mitochondrial membrane respiratory chain NADH dehydrogenase (Complex I) that is believed to belong to the minimal assembly required for catalysis. Complex I functions in the transfer of electrons from NADH to the respiratory chain. The immediate electron acceptor for the enzyme is believed to be ubiquinone. This Azemiops feae (Fea's viper) protein is NADH-ubiquinone oxidoreductase chain 4 (MT-ND4).